A 120-amino-acid polypeptide reads, in one-letter code: Ribosome-binding factor A (120 aa).

This sequence belongs to the RbfA family. As to quaternary structure, monomer. Binds 30S ribosomal subunits, but not 50S ribosomal subunits or 70S ribosomes.

The protein resides in the cytoplasm. Its function is as follows. One of several proteins that assist in the late maturation steps of the functional core of the 30S ribosomal subunit. Associates with free 30S ribosomal subunits (but not with 30S subunits that are part of 70S ribosomes or polysomes). Required for efficient processing of 16S rRNA. May interact with the 5'-terminal helix region of 16S rRNA. This Chlorobaculum parvum (strain DSM 263 / NCIMB 8327) (Chlorobium vibrioforme subsp. thiosulfatophilum) protein is Ribosome-binding factor A.